Consider the following 121-residue polypeptide: Large ribosomal subunit protein bL20 (121 aa).

The protein belongs to the bacterial ribosomal protein bL20 family.

Binds directly to 23S ribosomal RNA and is necessary for the in vitro assembly process of the 50S ribosomal subunit. It is not involved in the protein synthesizing functions of that subunit. The sequence is that of Large ribosomal subunit protein bL20 from Mycoplasma mycoides subsp. mycoides SC (strain CCUG 32753 / NCTC 10114 / PG1).